Reading from the N-terminus, the 355-residue chain is Protein RecA (355 aa).

74 to 81 provides a ligand contact to ATP; it reads GPESSGKT.

Belongs to the RecA family.

The protein localises to the cytoplasm. Can catalyze the hydrolysis of ATP in the presence of single-stranded DNA, the ATP-dependent uptake of single-stranded DNA by duplex DNA, and the ATP-dependent hybridization of homologous single-stranded DNAs. It interacts with LexA causing its activation and leading to its autocatalytic cleavage. This is Protein RecA from Cytophaga hutchinsonii (strain ATCC 33406 / DSM 1761 / CIP 103989 / NBRC 15051 / NCIMB 9469 / D465).